A 447-amino-acid polypeptide reads, in one-letter code: Chromosomal replication initiator protein DnaA (447 aa).

The domain I, interacts with DnaA modulators stretch occupies residues 1 to 74 (MENIEELWSA…MLLEVTGSEL (74 aa)). A domain II region spans residues 74 to 108 (LNTKFIIPDSLEEIEEQKPMPKPKQSTDTGDSPKS). A disordered region spans residues 85–107 (EEIEEQKPMPKPKQSTDTGDSPK). The span at 97–107 (KQSTDTGDSPK) shows a compositional bias: polar residues. Residues 109-325 (MLNSKYTFDT…GALIRVVAYS (217 aa)) form a domain III, AAA+ region region. ATP-binding residues include G153, G155, K156, and T157. Residues 326-447 (SLVNQDIDAS…EELKEKLKSI (122 aa)) are domain IV, binds dsDNA.

It belongs to the DnaA family. As to quaternary structure, oligomerizes as a right-handed, spiral filament on DNA at oriC.

It localises to the cytoplasm. In terms of biological role, plays an essential role in the initiation and regulation of chromosomal replication. ATP-DnaA binds to the origin of replication (oriC) to initiate formation of the DNA replication initiation complex once per cell cycle. Binds the DnaA box (a 9 base pair repeat at the origin) and separates the double-stranded (ds)DNA. Forms a right-handed helical filament on oriC DNA; dsDNA binds to the exterior of the filament while single-stranded (ss)DNA is stabiized in the filament's interior. The ATP-DnaA-oriC complex binds and stabilizes one strand of the AT-rich DNA unwinding element (DUE), permitting loading of DNA polymerase. After initiation quickly degrades to an ADP-DnaA complex that is not apt for DNA replication. Binds acidic phospholipids. The sequence is that of Chromosomal replication initiator protein DnaA from Oceanobacillus iheyensis (strain DSM 14371 / CIP 107618 / JCM 11309 / KCTC 3954 / HTE831).